A 393-amino-acid chain; its full sequence is MASLLARMGNSRRQNAAFMPFAHSMLRALGRSLGPLIANIAERNIQSFSGRAELGPGEETFENWLSQVHEVLPDWPMSEEEKIKRLMRTLRGPAREAMRLFQADNPNLNVAEFLRAMKLLFGASESSITAHGKFLSTLQAQGEKPSLYVIRLEVQLQNAIQAGVLPQSEANRTRLHQLLVGAELSRELRTKLKGLLQMHAHNEQENLPDFLELIRMIREEEDWDETFLRNKRPRRSETVMERAASPVVFQGSLPIVIGSADCNVIEIDDSQDDSDEDVILVEPEDPPLSSPGASSLRGTASTQEEMLIIESPDDFDEESPSTSSGSGQRNNGPGDLGRTRKRKYPIRCPHCGEEGHAKETCDNTSNKGQVFENLIVTLQELTHMERPKPSVPY.

Disordered stretches follow at residues 281–300 (VEPE…RGTA) and 313–341 (DDFD…RTRK). Polar residues-rich tracts occupy residues 291–300 (PGASSLRGTA) and 320–331 (PSTSSGSGQRNN). The CCHC-type zinc finger occupies 346–363 (IRCPHCGEEGHAKETCDN).

The protein belongs to the ZCCHC12 family.

This Mus musculus (Mouse) protein is Zinc finger CCHC domain-containing protein 18.